The primary structure comprises 461 residues: E3 ubiquitin-protein ligase parkin (461 aa).

The 61-residue stretch at 30–90 folds into the Ubiquitin-like domain; it reads VNIYVKSNVG…DSTVIEVLDF (61 aa). S92 is subject to Phosphoserine. An RING-type 0; atypical zinc finger spans residues 145–227; sequence AHFFIYCANP…SQGENDTAVP (83 aa). Zn(2+) is bound by residues C151, C155, C167, and C170. A Phosphothreonine modification is found at T176. Residues C197, C202, C213, H216, C240, C243, C255, H259, C262, C265, C291, C295, C334, C339, C354, C356, C361, C364, H369, C373, C415, and C418 each contribute to the Zn(2+) site. Positions 236–461 are TRIAD supradomain; the sequence is KKIPCLACTD…RDCMASHWFG (226 aa). Residues 240-295 form an RING-type 1 zinc finger; the sequence is CLACTDICDPVLVFSCDNRHVTCLECFKNYCGSRLKDRQFLSHPDFGYTLPCPAGC. 2 consecutive IBR-type zinc fingers follow at residues 315-373 and 411-452; these read EQYH…LGEC and LTKP…PWER. Residues 415–446 form an RING-type 2; atypical zinc finger; sequence CPKCRTSTERAGGCMHMICTRANCGFHWCWVC. The active site involves C428. Zn(2+) contacts are provided by C433, C438, C443, C446, C454, and H458.

This sequence belongs to the RBR family. Parkin subfamily. Forms an E3 ubiquitin ligase complex with E2 ubiquitin-conjugating enzymes. Auto-ubiquitinates in an E2-dependent manner leading to its own degradation. In terms of processing, phosphorylated. Activation requires phosphorylation at Ser-92 by Pink1 and binding to Pink1-phosphorylated polyubiquitin chains. Phosphorylation at Thr-176 by Pink1 is also important for mitochondrial localization.

The protein resides in the mitochondrion. It is found in the cytoplasm. The protein localises to the cytosol. It catalyses the reaction [E2 ubiquitin-conjugating enzyme]-S-ubiquitinyl-L-cysteine + [acceptor protein]-L-lysine = [E2 ubiquitin-conjugating enzyme]-L-cysteine + [acceptor protein]-N(6)-ubiquitinyl-L-lysine.. It functions in the pathway protein modification; protein ubiquitination. With respect to regulation, in the autoinhibited state the side chain of Phe-460 inserts into a hydrophobic groove in RING-0, occluding the ubiquitin acceptor site Cys-428, whereas the REP repressor element binds RING-1 and blocks its E2-binding site. Activation of park requires 2 steps: (1) phosphorylation at Ser-92 by Pink1 and (2) binding to phosphorylated ubiquitin, leading to unlock repression of the catalytic Cys-428 by the RING-0 region via an allosteric mechanism and converting park to its fully-active form. According to another report, phosphorylation at Ser-92 by Pink1 is not essential for activation and only binding to phosphorylated ubiquitin is essential to unlock repression. Its function is as follows. E3 ubiquitin-protein ligase which accepts ubiquitin from E2 ubiquitin-conjugating enzymes in the form of a thioester and then directly transfers the ubiquitin to targeted substrates, such as Marf, Opa1, Sep1, Tom20 and porin. Mediates monoubiquitination as well as 'Lys-6', 'Lys-11', 'Lys-48'-linked and 'Lys-63'-linked polyubiquitination of substrates, depending on the context. Protects against mitochondrial dysfunction during cellular stress, by acting downstream of Pink1, to coordinate mitochondrial quality control mechanisms that remove and replace dysfunctional mitochondrial components. Depending on the severity of mitochondrial damage and/or dysfunction, activity ranges from preventing apoptosis and stimulating mitochondrial biogenesis to regulating mitochondrial dynamics and eliminating severely damaged mitochondria via mitophagy. Appears to be particularly important in maintaining the physiology and function of cells with high energy demands that are undergoing stress or altered metabolic environment, including spermatids, muscle cells and neurons such as the dopaminergic (DA) neurons. Activation and recruitment onto the outer membrane of damaged/dysfunctional mitochondria (OMM) requires Pink1-mediated phosphorylation of both park and ubiquitin. In depolarized mitochondria, mediates the decision between mitophagy or preventing apoptosis by inducing either the poly- or monoubiquitination of porin/VDAC; polyubiquitination of porin promotes mitophagy, while monoubiquitination of porin decreases mitochondrial calcium influx which ultimately inhibits apoptosis. When cellular stress results in irreversible mitochondrial damage, promotes the autophagic degradation of dysfunctional depolarized mitochondria (mitophagy) by promoting the ubiquitination of mitochondrial proteins. Preferentially assembles 'Lys-6'-, 'Lys-11'- and 'Lys-63'-linked polyubiquitin chains following mitochondrial damage, leading to mitophagy. In developing tissues, inhibits JNK-mediated apoptosis by negatively regulating bsk transcription. The Pink1-park pathway also promotes fission and/or inhibits fusion of damaged mitochondria by mediating the ubiquitination and subsequent degradation of proteins involved in mitochondrial fusion/fission such as Marf and Opa1. This prevents the refusion of unhealthy mitochondria with the healthy mitochondrial network and/or initiates mitochondrial fragmentation facilitating their later engulfment by autophagosomes. Regulates motility of damaged mitochondria by phosphorylating Miro which likely promotes its park-dependent degradation by the proteasome; in motor neurons, this inhibits mitochondrial intracellular anterograde transport along the axons which probably increases the chance of the mitochondria being eliminated in the soma. The Pink1-park pathway is also involved in mitochondrial regeneration processes such as promoting mitochondrial biogenesis, activating localized mitochondrial repair, promoting selective turnover of mitochondrial proteins and initiating the mitochondrial import of endogenous proteins. Involved in mitochondrial biogenesis via the ubiquitination of transcriptional repressor Paris which leads to its subsequent proteasomal degradation and allows activation of the transcription factor srl. Promotes localized mitochondrial repair by activating the translation of specific nuclear-encoded mitochondrial RNAs (nc-mtRNAs) on the mitochondrial surface, including several key electron transport chain component nc-mtRNAs. The sequence is that of E3 ubiquitin-protein ligase parkin from Pediculus humanus subsp. corporis (Body louse).